The following is a 205-amino-acid chain: Inactive ribonuclease-like protein 9 (205 aa).

The signal sequence occupies residues 1–26 (MMRTLITTHPLPLLLLPQQLLQLVQF). 2 cysteine pairs are disulfide-bonded: cysteine 116-cysteine 168 and cysteine 123-cysteine 130. Asparagine 131 and asparagine 143 each carry an N-linked (GlcNAc...) asparagine glycan.

It belongs to the pancreatic ribonuclease family. In terms of tissue distribution, at the mRNA level, widely expressed. At protein level, restricted to epididymis. Expressed in spermatozoa (sperm head and neck), with higher levels on ejaculated and epididymal sperm than on testicular sperm (at protein level). Expressed in the epithelial cells of the epididymal tubule (at protein level). Not detected in muscle.

It localises to the secreted. Functionally, does not exhibit any ribonuclease activity. This is Inactive ribonuclease-like protein 9 (RNASE9) from Homo sapiens (Human).